A 492-amino-acid chain; its full sequence is Alpha/beta hydrolase ucsC (492 aa).

Serine 258 serves as the catalytic Nucleophile.

This sequence belongs to the AB hydrolase superfamily. FUS2 hydrolase family. Homodimer.

Its pathway is mycotoxin biosynthesis. Alpha/beta hydrolase; part of the gene cluster that mediates the biosynthesis of UCS1025A, a member of the pyrrolizidinone family that acts as a strong telomerase inhibitor and displays potent antibacterial and antitumor properties. These compounds share a hemiaminal-containing pyrrolizidinone core fused with a gamma-lactone, giving a furopyrrolizidine that is connected to a decalin fragment. The polyketide synthase module (PKS) of the PKS-NRPS ucsA is responsible for the synthesis of the polyketide backbone via the condensation of an acetyl-CoA starter unit with 6 malonyl-CoA units. The downstream nonribosomal peptide synthetase (NRPS) module then amidates the carboxyl end of the polyketide with a 2S,3S-methylproline derived from L-isoleucine by the 2-oxoglutarate-dependent dioxygenase ucsF which converts L-isoleucine to (4S,5S)-4-methylpyrroline-5-carboxylate that is further converted to 2S,3S-methylproline by the pyrroline-5-carboxylate reductase ucsG. Reductive release of the completed aminoacyl polyketide from the assembly line can form the 3-pyrrolin-2-one structure via an intramolecular Knoevenagel reaction. Because ucsA lacks a designated enoylreductase (ER) domain, the required activity is provided the enoyl reductase ucsL. This keto acyclic precursor is the substrate of the Diels-Alderase ucsH, that catalyzes the Diels-Alder cycloaddition. Oxidation of the 3S-methyl group to a carboxylate by the cytochrome P450 monooxygenase ucsK allows an oxa-Michael cyclization that might involve the reductase/dehydrogenase ucsI and which furnishes the furopyrrolizidine. The oxidase ucsJ likely plays a critical role in stereoselective reduction of the C5-C6 double bond to afford the required R-configured carboxylate group. Further enolization and oxidation at C5 by an unidentified enzyme affords the last intermediate that can undergo oxa-Michael cyclization to yield UCS1025A. In Acremonium sp, this protein is Alpha/beta hydrolase ucsC.